The following is a 90-amino-acid chain: MARVTVQDTVEKIGNRFDLVLVSSRRARQLQTGGKDALVPEENDKPTVIALREIEEGLITKDLLDARERQEQQEQDAAELAAVSSITHNR.

The disordered stretch occupies residues 69–90 (RQEQQEQDAAELAAVSSITHNR).

This sequence belongs to the RNA polymerase subunit omega family. The RNAP catalytic core consists of 2 alpha, 1 beta, 1 beta' and 1 omega subunit. When a sigma factor is associated with the core the holoenzyme is formed, which can initiate transcription.

It catalyses the reaction RNA(n) + a ribonucleoside 5'-triphosphate = RNA(n+1) + diphosphate. In terms of biological role, promotes RNA polymerase assembly. Latches the N- and C-terminal regions of the beta' subunit thereby facilitating its interaction with the beta and alpha subunits. This is DNA-directed RNA polymerase subunit omega from Aliivibrio salmonicida (strain LFI1238) (Vibrio salmonicida (strain LFI1238)).